Here is a 411-residue protein sequence, read N- to C-terminus: MTAEGPLAPEDRVLDREAIGRLCVSLIAAEQQDLLREGRVGHHQMIGARLLTAGHPSPDDLLIDEDTLGLDSLLMLSLVTRVAGFFHLSDSNTEDYLLVRRRLGEWVDLIDHHHTLMGPKARFTFATSGSTAGPKPVTHSAAALLSEGQAIAKILTERPPEVRRVLSCVPAHHIYGFLWSCLFPSRRGLEAKQLANLSASGIMRHARSGDLVVGTPFIWEQFADLDYRLPGDVVGVTSGAPSTAETWRCASALGPARMLDIYGSTETGGIGWRERRDDPFRTLPDLACFHDTLSRLGRRLDLQDEIAWDKDGGFTILGRKDEILQVAGSNVSPAAVRDILLRNPRVRDAAVRLDGRRLKAVISVAEGADEAEIEIELRATAARHLPAPARPDRFLFATELPRTGAGKLADW.

The protein belongs to the ATP-dependent AMP-binding enzyme family.

The enzyme catalyses (E)-4-coumarate + ATP + CoA = (E)-4-coumaroyl-CoA + AMP + diphosphate. In terms of biological role, converts p-coumaric acid into p-coumaryl CoA. This is necessary for the activation of the photoactive yellow protein (PYP) chromophore. This chain is 4-coumarate--CoA ligase (pcl), found in Cereibacter sphaeroides (strain ATCC 17023 / DSM 158 / JCM 6121 / CCUG 31486 / LMG 2827 / NBRC 12203 / NCIMB 8253 / ATH 2.4.1.) (Rhodobacter sphaeroides).